The primary structure comprises 295 residues: Foldase protein PrsA (295 aa).

The signal sequence occupies residues 1–19 (MKKVLIGFASIAMAFTLAA). C20 carries N-palmitoyl cysteine lipidation. C20 is lipidated: S-diacylglycerol cysteine. The PpiC domain maps to 136 to 229 (EPKVTVAQIL…YGYQVIKMIN (94 aa)).

The protein belongs to the PrsA family.

The protein resides in the cell membrane. It carries out the reaction [protein]-peptidylproline (omega=180) = [protein]-peptidylproline (omega=0). Plays a major role in protein secretion by helping the post-translocational extracellular folding of several secreted proteins. The sequence is that of Foldase protein PrsA from Pediococcus pentosaceus (strain ATCC 25745 / CCUG 21536 / LMG 10740 / 183-1w).